A 342-amino-acid chain; its full sequence is Phosphate acyltransferase (342 aa).

Belongs to the PlsX family. As to quaternary structure, homodimer. Probably interacts with PlsY.

Its subcellular location is the cytoplasm. The catalysed reaction is a fatty acyl-[ACP] + phosphate = an acyl phosphate + holo-[ACP]. It participates in lipid metabolism; phospholipid metabolism. In terms of biological role, catalyzes the reversible formation of acyl-phosphate (acyl-PO(4)) from acyl-[acyl-carrier-protein] (acyl-ACP). This enzyme utilizes acyl-ACP as fatty acyl donor, but not acyl-CoA. The protein is Phosphate acyltransferase of Leuconostoc mesenteroides subsp. mesenteroides (strain ATCC 8293 / DSM 20343 / BCRC 11652 / CCM 1803 / JCM 6124 / NCDO 523 / NBRC 100496 / NCIMB 8023 / NCTC 12954 / NRRL B-1118 / 37Y).